We begin with the raw amino-acid sequence, 190 residues long: Cytoglobin (190 aa).

A Globin domain is found at 18-167 (ELSEAERKAV…IYSHVTAAYK (150 aa)). C38 and C83 are disulfide-bonded. 2 residues coordinate heme b: H81 and H113.

This sequence belongs to the globin family. In terms of assembly, monomeric. Homodimer; disulfide-linked in vitro. Also homooligomeric in vitro. In terms of processing, the formation of an intramolecular disulfide bond between cysteines Cys-38 and Cys-83 specifically enhances the nitrite reductase activity. In terms of tissue distribution, widely expressed. Highest expression in heart, stomach, bladder and small intestine.

Its subcellular location is the cytoplasm. The protein resides in the nucleus. It carries out the reaction Fe(II)-heme b-[protein] + nitric oxide + O2 = Fe(III)-heme b-[protein] + nitrate. It catalyses the reaction Fe(III)-heme b-[protein] + nitric oxide + H2O = Fe(II)-heme b-[protein] + nitrite + 2 H(+). The catalysed reaction is 2 superoxide + 2 H(+) = H2O2 + O2. The enzyme catalyses H2O2 + AH2 = A + 2 H2O. With respect to regulation, the nitric oxide dioxygenase activity is activated by a reducing system composed of cytochrome b5, its upstream reductase CYB5R3 and NADH. Its function is as follows. Probable multifunctional globin with a hexacoordinated heme iron required for the catalysis of various reactions depending on redox condition of the cell as well as oxygen availability. Has a nitric oxide dioxygenase (NOD) activity and is most probably involved in cell-mediated and oxygen-dependent nitric oxide consumption. By scavenging this second messenger may regulate several biological processes including endothelium-mediated vasodilation and vascular tone. Under normoxic conditions functions as a nitric oxide dioxygenase (NOD) but under hypoxic conditions the globin may switch its function to that of a nitrite (NO2) reductase (NiR), generating nitric oxide. Could also have peroxidase and superoxide dismutase activities, detoxifying reactive oxygen species and protecting cells against oxidative stress. Also binds dioxygen with low affinity and could function as an oxygen sensor but has probably no function as a respiratory oxygen carrier. The protein is Cytoglobin of Homo sapiens (Human).